A 346-amino-acid chain; its full sequence is Fusaric acid resistance protein FusC (346 aa).

The next 4 helical transmembrane spans lie at 10–30 (VIIG…RYTG), 248–268 (VILA…VMLV), 291–311 (MGMG…GIYP), and 315–335 (GFVL…YMSL).

This sequence belongs to the aromatic acid exporter ArAE (TC 2.A.85) family.

Its subcellular location is the cell membrane. Involved in the resistance (detoxification) of the fungal toxin fusaric acid. The polypeptide is Fusaric acid resistance protein FusC (fusC) (Burkholderia cepacia (Pseudomonas cepacia)).